The sequence spans 533 residues: Tyrosine-protein kinase transforming protein Fps (533 aa).

Residues 1-46 (ASGQLHRPQPQEHTSTSAAAGTWRHTQASESRHRLPHCSAAPSHQD) form a disordered region. Positions 11 to 29 (QEHTSTSAAAGTWRHTQAS) are enriched in polar residues. In terms of domain architecture, F-BAR; degenerate spans 50–124 (MGFGPELWCP…LQEDRQSVCS (75 aa)). In terms of domain architecture, SH2 spans 171 to 260 (WYHGAIPRSE…KSGIVLTRAV (90 aa)). Residues 272–525 (VLLGERIGRG…PSFGAVHQDL (254 aa)) form the Protein kinase domain. Residues 278–286 (IGRGNFGEV) and Lys301 each bind ATP. The active-site Proton acceptor is Asp394. A Phosphotyrosine; by autocatalysis modification is found at Tyr424.

This sequence belongs to the protein kinase superfamily. Tyr protein kinase family. Fes/fps subfamily.

The enzyme catalyses L-tyrosyl-[protein] + ATP = O-phospho-L-tyrosyl-[protein] + ADP + H(+). The chain is Tyrosine-protein kinase transforming protein Fps (V-FPS) from Gallus gallus (Chicken).